Here is an 88-residue protein sequence, read N- to C-terminus: Small ribosomal subunit protein bS20 (88 aa).

The protein belongs to the bacterial ribosomal protein bS20 family.

Binds directly to 16S ribosomal RNA. In Heliobacterium modesticaldum (strain ATCC 51547 / Ice1), this protein is Small ribosomal subunit protein bS20.